A 526-amino-acid polypeptide reads, in one-letter code: Nucleolar complex protein 4 homolog A (526 aa).

3 helical membrane-spanning segments follow: residues 307-327, 358-378, and 386-406; these read AAYD…FILI, FFHL…LVAA, and LALT…CNLI.

Belongs to the CBF/MAK21 family.

The protein localises to the nucleus membrane. It is found in the nucleus. The protein resides in the nucleolus. The polypeptide is Nucleolar complex protein 4 homolog A (noc4l-a) (Xenopus laevis (African clawed frog)).